The primary structure comprises 1485 residues: Glutamate receptor ionotropic, NMDA 2B (1485 aa).

A signal peptide spans 1-26 (MKPRAECCSPKFWLVLAVLAVSGSRA). The Extracellular segment spans residues 27–557 (RSQKSPPSIG…SAFLEPFSAD (531 aa)). Residue Asn74 is glycosylated (N-linked (GlcNAc...) asparagine). Cysteines 86 and 321 form a disulfide. 2 residues coordinate Zn(2+): His127 and Glu284. N-linked (GlcNAc...) asparagine glycosylation is found at Asn341, Asn348, Asn444, and Asn491. 2 disulfide bridges follow: Cys429-Cys456 and Cys436-Cys457. Thr514 and Arg519 together coordinate L-glutamate. Asn542 is a glycosylation site (N-linked (GlcNAc...) asparagine). A helical membrane pass occupies residues 558 to 576 (VWVMMFVMLLIVSAVAVFV). At 577–603 (FEYFSPVGYNRCLADGREPGGPSFTIG) the chain is on the cytoplasmic side. Residues 604-623 (KAIWLLWGLVFNNSVPVQNP) constitute an intramembrane region (discontinuously helical). Residues 604–623 (KAIWLLWGLVFNNSVPVQNP) are pore-forming. Over 624 to 630 (KGTTSKI) the chain is Cytoplasmic. The helical transmembrane segment at 631 to 646 (MVSVWAFFAVIFLASY) threads the bilayer. The Extracellular portion of the chain corresponds to 647–817 (TANLAAFMIQ…VMSSQLDIDN (171 aa)). Asn688 carries N-linked (GlcNAc...) asparagine glycosylation. L-glutamate-binding positions include 690–691 (ST) and Asp732. Cys746 and Cys801 are oxidised to a cystine. A helical transmembrane segment spans residues 818 to 837 (MAGVFYMLGAAMALSLITFI). Residues 838–1485 (CEHLFYWQFR…EKLSSIESDV (648 aa)) lie on the Cytoplasmic side of the membrane. A phosphoserine mark is found at Ser882, Ser886, Ser917, and Ser920. 2 positions are modified to phosphotyrosine: Tyr962 and Tyr1039. 3 positions are modified to phosphoserine: Ser1058, Ser1061, and Ser1064. The segment at 1074–1097 (EGNAAKRRKQQYKDSLKKRPASAK) is disordered. A phosphotyrosine mark is found at Tyr1109 and Tyr1133. Phosphoserine is present on Ser1143. The residue at position 1155 (Tyr1155) is a Phosphotyrosine. A disordered region spans residues 1162 to 1194 (FKRDSVSGGGPCTNRSHLKHGAGDKHGVVSGVP). Residues Ser1255 and Ser1259 each carry the phosphoserine modification. Positions 1269 to 1278 (PVAVPSNAPS) are enriched in low complexity. Residues 1269–1302 (PVAVPSNAPSTKYPQSPTNSKAQKKTRNKLRRQH) are disordered. Residues 1280–1289 (KYPQSPTNSK) are compositionally biased toward polar residues. A compositionally biased stretch (basic residues) spans 1290–1301 (AQKKTRNKLRRQ). Residues 1292-1304 (KKTRNKLRRQHSY) are interaction with DAPK1. Ser1303 carries the post-translational modification Phosphoserine; by DAPK1. Phosphotyrosine is present on Tyr1475. A PDZ-binding motif is present at residues 1483–1485 (SDV).

Belongs to the glutamate-gated ion channel (TC 1.A.10.1) family. NR2B/GRIN2B subfamily. In terms of assembly, heterotetramer. Forms heterotetrameric channels composed of two GluN1/zeta subunits (GRIN1), and two identical GluN2/epsilon subunits (GRIN2A, GRIN2B, GRIN2C or GRIN2D) or GluN3 subunits (GRIN3A or GRIN3B) (in vitro). Can also form heterotetrameric channels that contain at least two GluN1 subunits and at least two different GluN2 subunits (or a combination of one GluN2 and one GluN3 subunits) (in vitro). In vivo, the subunit composition may depend on the expression levels of the different subunits. Found in a complex with GRIN1, GRIN3A and PPP2CB. Found in a complex with GRIN1 and GRIN3B. Interacts with MAGI3. Interacts with HIP1 and Neto1. Interacts with PDZ domains of PATJ, DLG3 and DLG4. Interacts with DAPK1. Found in a complex with GRIN1 and PRR7. Interacts with PRR7. Interacts with CAMK2A. Interacts with ARC; preventing ARC oligomerization. Interacts with TMEM25. Interacts (via the extreme C-terminus) with FRMPD2 (via the second PDZ domain); the interaction is direct and is likely to promote NMDAR-mediated neural signal transmission. Interacts with FAM81A; the interaction facilitates condensate formation via liquid-liquid phase separation. Phosphorylated on tyrosine residues. Phosphorylation at Ser-1303 by DAPK1 enhances synaptic NMDA receptor channel activity.

The protein localises to the cell membrane. Its subcellular location is the postsynaptic cell membrane. It localises to the cell projection. The protein resides in the dendrite. It is found in the late endosome. The protein localises to the lysosome. Its subcellular location is the cytoplasm. It localises to the cytoskeleton. The catalysed reaction is Ca(2+)(in) = Ca(2+)(out). It catalyses the reaction Na(+)(in) = Na(+)(out). The enzyme catalyses K(+)(in) = K(+)(out). Component of N-methyl-D-aspartate (NMDA) receptors (NMDARs) that function as heterotetrameric, ligand-gated cation channels with high calcium permeability and voltage-dependent block by Mg(2+). Participates in synaptic plasticity for learning and memory formation by contributing to the long-term depression (LTD) of hippocampus membrane currents. Channel activation requires binding of the neurotransmitter L-glutamate to the GluN2 subunit, glycine or D-serine binding to the GluN1 subunit, plus membrane depolarization to eliminate channel inhibition by Mg(2+). NMDARs mediate simultaneously the potasium efflux and the influx of calcium and sodium. Each GluN2 subunit confers differential attributes to channel properties, including activation, deactivation and desensitization kinetics, pH sensitivity, Ca2(+) permeability, and binding to allosteric modulators. In concert with DAPK1 at extrasynaptic sites, acts as a central mediator for stroke damage. Its phosphorylation at Ser-1303 by DAPK1 enhances synaptic NMDA receptor channel activity inducing injurious Ca2+ influx through them, resulting in an irreversible neuronal death. This Canis lupus familiaris (Dog) protein is Glutamate receptor ionotropic, NMDA 2B.